A 440-amino-acid chain; its full sequence is Peroxisome proliferator-activated receptor delta (440 aa).

A disordered region spans residues 1–53 (MEQPQEETPEAREEEKEEVAMGDGAPELNGGPEHTLPSSSCADLSQNSSPSSL). Residues 36-53 (LPSSSCADLSQNSSPSSL) are compositionally biased toward polar residues. The segment at residues 70 to 144 (NMECRVCGDK…LGMSHNAIRF (75 aa)) is a DNA-binding region (nuclear receptor). 2 consecutive NR C4-type zinc fingers follow at residues 73–93 (CRVC…CEGC) and 110–132 (CDRI…FQKC). Residues 210 to 438 (FVIHDIETLW…HPLLQEIYKD (229 aa)) form the NR LBD domain.

The protein belongs to the nuclear hormone receptor family. NR1 subfamily. Heterodimer with the retinoid X receptor. Interacts (via domain NR LBD) with CRY1 and CRY2 in a ligand-dependent manner. In terms of processing, 'Lys-48'-linked polyubiquitinated; leading to proteasomal degradation. Deubiquitinated and stabilized by OTUD3. Heart, adrenal and intestine.

The protein resides in the nucleus. Ligand-activated transcription factor key mediator of energy metabolism in adipose tissues. Receptor that binds peroxisome proliferators such as hypolipidemic drugs and fatty acids. Has a preference for poly-unsaturated fatty acids, such as gamma-linoleic acid and eicosapentanoic acid. Once activated by a ligand, the receptor binds to promoter elements of target genes. Regulates the peroxisomal beta-oxidation pathway of fatty acids. Functions as transcription activator for the acyl-CoA oxidase gene. Decreases expression of NPC1L1 once activated by a ligand. This Mus musculus (Mouse) protein is Peroxisome proliferator-activated receptor delta (Ppard).